Reading from the N-terminus, the 98-residue chain is NADH-ubiquinone oxidoreductase chain 4L (98 aa).

3 helical membrane passes run 1–21, 29–49, and 61–81; these read MTLIHMNILMAFSMSLVGLLM, ALLCLEGMMLSLFVLATLTIL, and IILLVFAACEAAIGLALLVMV.

It belongs to the complex I subunit 4L family. Core subunit of respiratory chain NADH dehydrogenase (Complex I) which is composed of 45 different subunits.

The protein localises to the mitochondrion inner membrane. It carries out the reaction a ubiquinone + NADH + 5 H(+)(in) = a ubiquinol + NAD(+) + 4 H(+)(out). Core subunit of the mitochondrial membrane respiratory chain NADH dehydrogenase (Complex I) which catalyzes electron transfer from NADH through the respiratory chain, using ubiquinone as an electron acceptor. Part of the enzyme membrane arm which is embedded in the lipid bilayer and involved in proton translocation. The chain is NADH-ubiquinone oxidoreductase chain 4L (MT-ND4L) from Megaptera novaeangliae (Humpback whale).